We begin with the raw amino-acid sequence, 405 residues long: Growth/differentiation factor 11 (405 aa).

The signal sequence occupies residues 1 to 20 (MVLAAPLLLGFLLLALELRP). Residues 21–296 (RGEAAEGPAA…VLENTKRSRR (276 aa)) constitute a propeptide that is removed on maturation. An N-linked (GlcNAc...) asparagine glycan is attached at N92. Cystine bridges form between C302–C312, C311–C370, C339–C402, and C343–C404.

The protein belongs to the TGF-beta family. As to quaternary structure, homodimer; disulfide-linked. Interacts directly with ACVR2B. Interacts directly with ACVR2A. Interacts with ACVR1B, TGFBR1 and ACVR1C in an ACVR2B-dependent manner. Interacts with FST isoform 2/FS288. In terms of processing, synthesized as large precursor molecule that undergoes proteolytic cleavage by furin-like proteases. This produces an inactive form consisting of the mature C-terminal portion non-covalently bound to its cleaved N-terminal propeptide. Activation of the mature form requires additional cleavage of the propeptide by a tolloid-like metalloproteinase. Highly expressed in the developing limb bud, initially detected in the distal mesenchyme, and later localizing to regions around the developing bones. Is also expressed in adult dental pulp and brain.

The protein localises to the secreted. Its function is as follows. Secreted signal that acts globally to regulate anterior/posterior axial patterning during development. May play critical roles in patterning both mesodermal and neural tissues. It is required for proper vertebral patterning and orofacial development. Signals through activin receptors type-2, ACVR2A and ACVR2B, and activin receptors type-1, ACVR1B, ACVR1C and TGFBR1 leading to the phosphorylation of SMAD2 and SMAD3. This chain is Growth/differentiation factor 11 (Gdf11), found in Mus musculus (Mouse).